Reading from the N-terminus, the 336-residue chain is Foldase protein PrsA (336 aa).

A signal peptide spans 1 to 22 (MKSAKKLLSVLCLGIFILTFTA). C23 is lipidated: N-palmitoyl cysteine. A lipid anchor (S-diacylglycerol cysteine) is attached at C23. The region spanning 194–286 (PNTMNVSHIL…FGYHIIKINS (93 aa)) is the PpiC domain.

It belongs to the PrsA family.

The protein resides in the cell membrane. It catalyses the reaction [protein]-peptidylproline (omega=180) = [protein]-peptidylproline (omega=0). In terms of biological role, plays a major role in protein secretion by helping the post-translocational extracellular folding of several secreted proteins. The chain is Foldase protein PrsA from Clostridium botulinum (strain Kyoto / Type A2).